A 375-amino-acid chain; its full sequence is Alanine racemase (375 aa).

The active-site Proton acceptor; specific for D-alanine is lysine 38. Lysine 38 is subject to N6-(pyridoxal phosphate)lysine. Arginine 137 provides a ligand contact to substrate. Tyrosine 266 (proton acceptor; specific for L-alanine) is an active-site residue. Methionine 314 provides a ligand contact to substrate.

Belongs to the alanine racemase family. The cofactor is pyridoxal 5'-phosphate.

The enzyme catalyses L-alanine = D-alanine. The protein operates within amino-acid biosynthesis; D-alanine biosynthesis; D-alanine from L-alanine: step 1/1. Catalyzes the interconversion of L-alanine and D-alanine. May also act on other amino acids. The protein is Alanine racemase (alr) of Cutibacterium acnes (strain DSM 16379 / KPA171202) (Propionibacterium acnes).